The sequence spans 885 residues: DNA mismatch repair protein MutS (885 aa).

626-633 (GPNMGGKS) contributes to the ATP binding site.

The protein belongs to the DNA mismatch repair MutS family.

Its function is as follows. This protein is involved in the repair of mismatches in DNA. It is possible that it carries out the mismatch recognition step. This protein has a weak ATPase activity. The sequence is that of DNA mismatch repair protein MutS from Burkholderia cenocepacia (strain ATCC BAA-245 / DSM 16553 / LMG 16656 / NCTC 13227 / J2315 / CF5610) (Burkholderia cepacia (strain J2315)).